Here is a 126-residue protein sequence, read N- to C-terminus: MFS14 protein (126 aa).

The segment at residues 1–23 is a signal peptide (or 24, or 26); it reads MALEAATAPRALLAACLVLLVLG.

As to expression, enhanced expression in male flowers. Accumulates in the tapetum.

This chain is MFS14 protein (MFS14), found in Zea mays (Maize).